We begin with the raw amino-acid sequence, 222 residues long: MAASITAITVENLEYPAVVTSPVTGKSYFLGGAGERGLTIEGNFIKFTAIGVYLEDIAVASLAAKWKGKSSEELLETLDFYRDIISGPFEKLIRGSKIRELSGPEYSRKVMENCVAHLKSVGTYGDAEAEAMQKFAEAFKPVNFPPGASVFYRQSPDGILGLSFSPDTSIPEKEAALIENKAVSSAVLETMIGEHAVSPDLKRCLAARLPALLNEGAFKIGN.

Residues Thr-48, Asn-113, and Thr-190 each contribute to the substrate site.

The protein belongs to the chalcone isomerase family.

It carries out the reaction a chalcone = a flavanone.. It participates in secondary metabolite biosynthesis; flavonoid biosynthesis. Catalyzes the intramolecular cyclization of bicyclic chalcones into tricyclic (S)-flavanones. Responsible for the isomerization of 4,2',4',6'-tetrahydroxychalcone (also termed chalcone) into naringenin. The protein is Chalcone--flavanone isomerase 1 (CHI1) of Medicago sativa (Alfalfa).